Reading from the N-terminus, the 320-residue chain is GRAM domain-containing protein 2A (320 aa).

Positions 33 to 56 (TEKPGKVQEPPDDGSLHWSEGSKG) are disordered. A GRAM domain is found at 74 to 141 (QQYHKLFKDI…VSVQLIKKHK (68 aa)). The helical transmembrane segment at 278–298 (LLKVIFVMICFLVLSSSYLAF) threads the bilayer.

Post-translationally, phosphorylated.

The protein localises to the endoplasmic reticulum membrane. Its subcellular location is the cell membrane. Participates in the organization ofendoplasmic reticulum-plasma membrane contact sites (EPCS) with pleiotropic functions including STIM1 recruitment and calcium homeostasis. Constitutive tether that co-localize with ESYT2/3 tethers at endoplasmic reticulum-plasma membrane contact sites in a phosphatidylinositol lipid-dependent manner. Pre-marks the subset of phosphtidylinositol 4,5-biphosphate (PI(4,5)P2)-enriched EPCS destined for the store operated calcium entry pathway (SOCE). This is GRAM domain-containing protein 2A from Mus musculus (Mouse).